The chain runs to 393 residues: S-adenosylmethionine synthase 2 (393 aa).

Mg(2+) is bound at residue Glu9. Position 15 (His15) interacts with ATP. Glu43 contacts K(+). The L-methionine site is built by Glu56 and Gln99. Residues 167 to 169, 235 to 238, Asp246, 252 to 253, Ala269, Lys273, and Lys277 each bind ATP; these read DGK, SGRF, and RK. L-methionine is bound at residue Asp246. Lys277 is a binding site for L-methionine.

Belongs to the AdoMet synthase family. In terms of assembly, homotetramer. Mn(2+) is required as a cofactor. The cofactor is Mg(2+). Co(2+) serves as cofactor. It depends on K(+) as a cofactor. Mostly expressed in flowers, seedpods and roots, and, to a lower extent, in stems and leaves.

It is found in the cytoplasm. The enzyme catalyses L-methionine + ATP + H2O = S-adenosyl-L-methionine + phosphate + diphosphate. Its pathway is amino-acid biosynthesis; S-adenosyl-L-methionine biosynthesis; S-adenosyl-L-methionine from L-methionine: step 1/1. In terms of biological role, catalyzes the formation of S-adenosylmethionine from methionine and ATP. The reaction comprises two steps that are both catalyzed by the same enzyme: formation of S-adenosylmethionine (AdoMet) and triphosphate, and subsequent hydrolysis of the triphosphate. This is S-adenosylmethionine synthase 2 (MSAMS2) from Brassica juncea (Indian mustard).